The chain runs to 190 residues: Capsid protein (190 aa).

Residues 1 to 24 form a disordered region; it reads MSTVGTGKLTRAQRRAAARKNKRN. Residue S2 is modified to N-acetylserine; by host. Positions 11 to 24 are enriched in basic residues; sequence RAQRRAAARKNKRN.

The protein belongs to the bromovirus capsid protein family.

Its subcellular location is the virion. Capsid protein. Probably binds RNA and plays a role in packaging. This Cowpea chlorotic mottle virus (CCMV) protein is Capsid protein.